The following is a 115-amino-acid chain: Putative HNH nuclease YajD (115 aa).

In terms of domain architecture, HNH spans 27-75 (CGRCSREFVYSNLRELTVHHIDHDHTNNPEDGSNWELLCLYCHDHEHSK).

Belongs to the HNH nuclease family.

This chain is Putative HNH nuclease YajD (yajD), found in Escherichia coli O157:H7.